The following is a 289-amino-acid chain: Spore coat polysaccharide biosynthesis protein SpsD (289 aa).

Residues 137-289 (FELGPPEPGD…YHIWPGKEAK (153 aa)) form the N-acetyltransferase domain.

It functions in the pathway spore coat biogenesis; spore coat polysaccharide biosynthesis. The chain is Spore coat polysaccharide biosynthesis protein SpsD (spsD) from Bacillus subtilis (strain 168).